A 504-amino-acid polypeptide reads, in one-letter code: MEKFQGYLEFDGARQQSFLYPLFFREYIYVLAYDHGLNRLNRNRSIFVENSDYEKKYSSLIVKRLIWRMYEQNRLIIPTTDLHKNPVLGHTNHLYYQMISVLFAVIVEIPFSLSLGFSFEGKQIKKSYNLQSIHSLFPFLEDKLSHFNYVLDVLIPYPIHLEILVQTLRYRVKDASSLHFFRFCLYEYGNWKNFDIKKKCILNPRFFLFLYNSHICEYESIFFFLRKRSSHLRSIAYEVFFERILFYGKIHHFFKVFVNNFPATLGLLKDPFLHYVRYHGKNILATKDTPLLMNKWKFYFLNFWQCYFSVWFPSQKVNINQLSKDNLEFLGYLSSLRLNPLVVRSQMLENSFLIDNIRIKFDSKIPISSIIGSLAKDKFCNVLGHPISKATWTDSSDSDILNRFVRICRKISHYYSGSSKKKNLYRIKYILRLCCVKTLARKHKSTVRAFLKRLGSVLLEEFLTGEDQVLSLIFPRSYYASKRLYRVRIWYLDILYLHDLVNHE.

It belongs to the intron maturase 2 family. MatK subfamily.

The protein resides in the plastid. Its subcellular location is the chloroplast. Its function is as follows. Usually encoded in the trnK tRNA gene intron. Probably assists in splicing its own and other chloroplast group II introns. In Draba nemorosa (Woodland whitlowgrass), this protein is Maturase K.